A 473-amino-acid chain; its full sequence is MFS transporter prlG (473 aa).

Basic and acidic residues predominate over residues 1 to 12 (MSSTDAEAKNEE). The segment at 1–27 (MSSTDAEAKNEEAVDWEGPDDPENPRN) is disordered. Positions 13-22 (AVDWEGPDDP) are enriched in acidic residues. A run of 11 helical transmembrane segments spans residues 37–57 (VLLV…FAPG), 71–91 (IVAS…PFLL), 101–121 (LIIY…CALS), 125–145 (AMFL…MAIG), 163–183 (ALFG…GGFV), 191–211 (WTFW…LVLM), 266–286 (PIVF…YLLF), 305–325 (GLAY…FAVL), 345–365 (LILM…YGWS), 372–392 (WIVP…ILMP), and 409–429 (ALAA…LAGP).

It belongs to the major facilitator superfamily.

It is found in the cell membrane. In terms of biological role, efflux pump that might be required for efficient secretion of pyrrolocin or other secondary metabolies produced by the pyrrolocin gene cluster. This Fungal sp. (strain NRRL 50135) protein is MFS transporter prlG.